The following is a 459-amino-acid chain: Vasoactive intestinal polypeptide receptor 1 (459 aa).

The first 30 residues, 1 to 30 (MRPPSPPHVRWLCVLAGALACALRPAGSQA), serve as a signal peptide directing secretion. The Extracellular portion of the chain corresponds to 31-142 (ASPQHECEYL…EQQQTKFYNT (112 aa)). 5 cysteine pairs are disulfide-bonded: Cys-37-Cys-209, Cys-50-Cys-72, Cys-63-Cys-105, Cys-86-Cys-122, and Cys-216-Cys-286. N-linked (GlcNAc...) asparagine glycans are attached at residues Asn-58, Asn-69, and Asn-100. The helical transmembrane segment at 143–167 (VKTGYTIGYSLSLASLLVAMAILSL) threads the bilayer. Residues 168–175 (FRKLHCTR) lie on the Cytoplasmic side of the membrane. A helical transmembrane segment spans residues 176 to 197 (NYIHMHLFMSFILRATAVFIKD). The Extracellular segment spans residues 198–217 (MALFNSGEIDHCSEASVGCK). Residues 218–242 (AAVVFFQYCVMANFFWLLVEGLYLY) form a helical membrane-spanning segment. At 243–255 (TLLAVSFFSERKY) the chain is on the cytoplasmic side. The chain crosses the membrane as a helical span at residues 256–277 (FWGYILIGWGVPSVFITIWTVV). Over 278–293 (RIYFEDFGCWDTIINS) the chain is Extracellular. The N-linked (GlcNAc...) asparagine glycan is linked to Asn-292. Residues 294 to 318 (SLWWIIKAPILLSILVNFVLFICII) form a helical membrane-spanning segment. Residues 319 to 340 (RILVQKLRPPDIGKNDSSPYSR) lie on the Cytoplasmic side of the membrane. A helical transmembrane segment spans residues 341–361 (LAKSTLLLIPLFGIHYVMFAF). The Extracellular portion of the chain corresponds to 362–369 (FPDNFKAQ). Residues 370-393 (VKMVFELVVGSFQGFVVAILYCFL) form a helical membrane-spanning segment. Residues 394–459 (NGEVQAELRR…SSFQAEVSLV (66 aa)) lie on the Cytoplasmic side of the membrane.

Belongs to the G-protein coupled receptor 2 family. In terms of assembly, interacts with ADCYAP1/PACAP; activated by both PACAP27 and PACAP38 neuropeptides. Interacts with VIP; the interaction results in VIPR1 activation. In terms of tissue distribution, in liver, lung, intestines, thymus and brain (mostly in the cerebral cortex and hippocampus).

It localises to the cell membrane. G protein-coupled receptor activated by the neuropeptides vasoactive intestinal peptide (VIP) and pituitary adenylate cyclase-activating polypeptide (ADCYAP1/PACAP). Binds VIP and both PACAP27 and PACAP38 bioactive peptides with the following order of ligand affinity VIP = PACAP27 &gt; PACAP38. Ligand binding causes a conformation change that triggers signaling via guanine nucleotide-binding proteins (G proteins) and modulates the activity of downstream effectors. Activates cAMP-dependent pathway. The sequence is that of Vasoactive intestinal polypeptide receptor 1 from Rattus norvegicus (Rat).